Consider the following 426-residue polypeptide: Enolase (426 aa).

Glutamine 163 serves as a coordination point for (2R)-2-phosphoglycerate. Glutamate 205 functions as the Proton donor in the catalytic mechanism. Mg(2+)-binding residues include aspartate 242, glutamate 285, and aspartate 312. Residues lysine 337, arginine 366, serine 367, and lysine 388 each coordinate (2R)-2-phosphoglycerate. Lysine 337 functions as the Proton acceptor in the catalytic mechanism.

The protein belongs to the enolase family. Mg(2+) serves as cofactor.

The protein localises to the cytoplasm. The protein resides in the secreted. Its subcellular location is the cell surface. The catalysed reaction is (2R)-2-phosphoglycerate = phosphoenolpyruvate + H2O. The protein operates within carbohydrate degradation; glycolysis; pyruvate from D-glyceraldehyde 3-phosphate: step 4/5. Catalyzes the reversible conversion of 2-phosphoglycerate (2-PG) into phosphoenolpyruvate (PEP). It is essential for the degradation of carbohydrates via glycolysis. In Gluconobacter oxydans (strain 621H) (Gluconobacter suboxydans), this protein is Enolase.